We begin with the raw amino-acid sequence, 199 residues long: Tropomyosin-1 (199 aa).

Positions 1 to 199 form a coiled coil; the sequence is MDKIREKLSN…DEIAASLENL (199 aa). Residues K39 and K59 each participate in a glycyl lysine isopeptide (Lys-Gly) (interchain with G-Cter in ubiquitin) cross-link. Disordered stretches follow at residues 59-81 and 102-147; these read KLEAGLSDSKQTEQDNVEKENQI and LAES…TEKL. Composition is skewed to basic and acidic residues over residues 68-80 and 102-114; these read KQTEQDNVEKENQ and LAESKQLSEDSHH. A compositionally biased stretch (polar residues) spans 115–126; that stretch reads LQSNNDNFSKKN. Residues 136–147 show a composition bias toward basic and acidic residues; that stretch reads SDTKLKETTEKL. K187 is covalently cross-linked (Glycyl lysine isopeptide (Lys-Gly) (interchain with G-Cter in ubiquitin)). Position 195 is a phosphoserine (S195).

As to quaternary structure, homodimer.

It localises to the cytoplasm. The protein localises to the cytoskeleton. The polypeptide is Tropomyosin-1 (TPM1) (Saccharomyces cerevisiae (strain ATCC 204508 / S288c) (Baker's yeast)).